A 254-amino-acid chain; its full sequence is NAD kinase (254 aa).

Residue aspartate 44 is the Proton acceptor of the active site. Residues 44–45 (DG), 114–115 (NE), aspartate 144, alanine 152, 155–160 (TAYNYS), and alanine 179 each bind NAD(+).

It belongs to the NAD kinase family. It depends on a divalent metal cation as a cofactor.

It is found in the cytoplasm. The enzyme catalyses NAD(+) + ATP = ADP + NADP(+) + H(+). In terms of biological role, involved in the regulation of the intracellular balance of NAD and NADP, and is a key enzyme in the biosynthesis of NADP. Catalyzes specifically the phosphorylation on 2'-hydroxyl of the adenosine moiety of NAD to yield NADP. This Cereibacter sphaeroides (strain ATCC 17023 / DSM 158 / JCM 6121 / CCUG 31486 / LMG 2827 / NBRC 12203 / NCIMB 8253 / ATH 2.4.1.) (Rhodobacter sphaeroides) protein is NAD kinase.